Consider the following 873-residue polypeptide: DNA mismatch repair protein MutS (873 aa).

601-608 lines the ATP pocket; the sequence is GPNMSGKS.

Belongs to the DNA mismatch repair MutS family.

Its function is as follows. This protein is involved in the repair of mismatches in DNA. It is possible that it carries out the mismatch recognition step. This protein has a weak ATPase activity. This is DNA mismatch repair protein MutS from Staphylococcus epidermidis (strain ATCC 12228 / FDA PCI 1200).